A 91-amino-acid polypeptide reads, in one-letter code: Uteroglobin (91 aa).

A signal peptide spans 1–21 (MKLAITITLAILALCCSPASA).

It belongs to the secretoglobin family. As to quaternary structure, antiparallel homodimer; disulfide-linked. Interaction with LMBR1L is controversial. In terms of tissue distribution, club cells (nonciliated cells of the surface epithelium of the pulmonary airways). Expressed in lung, uterus, and prostate.

The protein resides in the secreted. Binds phosphatidylcholine, phosphatidylinositol, polychlorinated biphenyls (PCB) and weakly progesterone, potent inhibitor of phospholipase A2. This is Uteroglobin (SCGB1A1) from Equus caballus (Horse).